A 552-amino-acid polypeptide reads, in one-letter code: Phosphoglucomutase (552 aa).

S143 serves as the catalytic Phosphoserine intermediate. Mg(2+) contacts are provided by S143, D295, D297, and D299.

Belongs to the phosphohexose mutase family. Requires Mg(2+) as cofactor.

It carries out the reaction alpha-D-glucose 1-phosphate = alpha-D-glucose 6-phosphate. Its pathway is glycolipid metabolism; diglucosyl-diacylglycerol biosynthesis. In terms of biological role, catalyzes the interconversion between glucose-6-phosphate and alpha-glucose-1-phosphate. This is the first step in the biosynthesis of diglucosyl-diacylglycerol (Glc2-DAG), i.e. the predominant glycolipid found in the S.aureus membrane, which is also used as a membrane anchor for lipoteichoic acid (LTA). The sequence is that of Phosphoglucomutase (pgcA) from Staphylococcus aureus (strain Mu50 / ATCC 700699).